Reading from the N-terminus, the 661-residue chain is UvrABC system protein B (661 aa).

Positions K25 to R182 constitute a Helicase ATP-binding domain. G38–T45 serves as a coordination point for ATP. Positions Y91–I114 match the Beta-hairpin motif. A Helicase C-terminal domain is found at Q430–I592. The region spanning K621 to A656 is the UVR domain.

It belongs to the UvrB family. As to quaternary structure, forms a heterotetramer with UvrA during the search for lesions. Interacts with UvrC in an incision complex.

It localises to the cytoplasm. Its function is as follows. The UvrABC repair system catalyzes the recognition and processing of DNA lesions. A damage recognition complex composed of 2 UvrA and 2 UvrB subunits scans DNA for abnormalities. Upon binding of the UvrA(2)B(2) complex to a putative damaged site, the DNA wraps around one UvrB monomer. DNA wrap is dependent on ATP binding by UvrB and probably causes local melting of the DNA helix, facilitating insertion of UvrB beta-hairpin between the DNA strands. Then UvrB probes one DNA strand for the presence of a lesion. If a lesion is found the UvrA subunits dissociate and the UvrB-DNA preincision complex is formed. This complex is subsequently bound by UvrC and the second UvrB is released. If no lesion is found, the DNA wraps around the other UvrB subunit that will check the other stand for damage. This chain is UvrABC system protein B, found in Rickettsia bellii (strain RML369-C).